A 236-amino-acid chain; its full sequence is Putative protein ZBED10P (236 aa).

This Homo sapiens (Human) protein is Putative protein ZBED10P.